Here is a 288-residue protein sequence, read N- to C-terminus: Protease HtpX (288 aa).

Transmembrane regions (helical) follow at residues 4 to 24 and 36 to 56; these read VMLFLITNLAVVLVLSVVLNI and LSGLLVMAAVFGFGGAFISLM. His143 contributes to the Zn(2+) binding site. Glu144 is a catalytic residue. A Zn(2+)-binding site is contributed by His147. 2 helical membrane passes run 151–171 and 193–213; these read GDMVTMTLMQGVVNTFVIFLS and MVYFAVSIALELVFGFLASFI. A Zn(2+)-binding site is contributed by Glu222.

This sequence belongs to the peptidase M48B family. The cofactor is Zn(2+).

It localises to the cell inner membrane. The polypeptide is Protease HtpX (Vibrio vulnificus (strain YJ016)).